The chain runs to 181 residues: Large ribosomal subunit protein uL22 (181 aa).

A disordered region spans residues 157–181; the sequence is PEAAKKPGKKTSAVEKSKKATAATH.

Belongs to the universal ribosomal protein uL22 family.

In Biphyllus lunatus (Beetle), this protein is Large ribosomal subunit protein uL22 (RpL17).